Here is a 642-residue protein sequence, read N- to C-terminus: MSYTGFVQGSETTLQSTYCDTSAQPTCDYGYGTWNSGTNRGYENYGYGYGYGQDNTTNYGYGMATSHSWEMASSDTNANPSASGSASADSVLSRINQRLDMMPHLETDMIQGGVYGSGGGERYDSYEACDSRAILSERDLYRSSYDYGELDPEMEMAYEGQYDAYRDQFRMRGGDTFGPRAQGWARDARSGRPMASGYGRMWEDPMGARGQCMPGASRLPSLFSQNIIPEYGMFQGMRGGGAFSGGSRFGFGFGNGMKQMRRTWKTWTTADFRTKKKKRKQGGSPDEPDSKATRTDCSDNSDSDNDEGTEGEAAEGTESAEAMEKGSRVDGEDEEGKEDGREEGKEDPEKGALTAQDESSQAKRKLQASKKSQDKQKKRQRDRMVERIQFVCSLCKYRTFYEDEMGSHLDSKFHKEHFKYVGTKLPKQTADFLQEYVTNKTKKTEELRKTVEDLDGLIQQIYRDQDLTQEIAMEHFVKKVEAAHCAACDLFIPMQFGIIQKHLKTMDHNRNRRLMMEQSKKSSLMVARSILNNKLISKKLERYLKGENPFTDNPEEEKEQDEVEAGALDEGAPSEATELTEGVPAQPPVPLEPAPGTTTPPPPPPPEEEESPVPLLGGALQCQIRGIPGLDMEDDEEGGGGP.

Residues 1 to 269 (MSYTGFVQGS…MRRTWKTWTT (269 aa)) are sufficient for activation of CTE-mediated expression. Arg209 is modified (asymmetric dimethylarginine; alternate). Residue Arg209 is modified to Omega-N-methylarginine; alternate. An omega-N-methylarginine mark is found at Arg218, Arg238, and Arg248. Lys258 carries the post-translational modification N6-acetyllysine. The tract at residues 265–382 (KTWTTADFRT…QDKQKKRQRD (118 aa)) is disordered. Residue Thr268 is modified to Phosphothreonine. The Nuclear localization signal motif lies at 275–280 (KKKKRK). The short motif at 281–297 (QGGSPDEPDSKATRTDC) is the Nuclear export signal (NES) element. Position 284 is a phosphoserine (Ser284). Over residues 288-297 (PDSKATRTDC) the composition is skewed to basic and acidic residues. Thr293 carries the post-translational modification Phosphothreonine. Ser298 bears the Phosphoserine mark. The segment covering 299-315 (DNSDSDNDEGTEGEAAE) has biased composition (acidic residues). Positions 338-350 (EDGREEGKEDPEK) are enriched in basic and acidic residues. Residues 363 to 365 (KRK) carry the Nuclear localization signal motif. C2H2 AKAP95-type zinc fingers lie at residues 392–414 (CSLCKYRTFYEDEMGSHLDSKFH) and 485–508 (CAACDLFIPMQFGIIQKHLKTMDH). The interval 546-642 (GENPFTDNPE…EDDEEGGGGP (97 aa)) is disordered. The segment covering 553 to 564 (NPEEEKEQDEVE) has biased composition (acidic residues). Positions 585–605 (AQPPVPLEPAPGTTTPPPPPP) are enriched in pro residues. Positions 631–642 (DMEDDEEGGGGP) are enriched in acidic residues.

The protein belongs to the AKAP95 family. In terms of assembly, interacts (via N-terminus) with DHX9 (via RGG region). Interacts with TMPO isoform Beta, PRPF40A, RNF43, lamin-B. Interacts with HDAC3; increased during mitosis. Post-translationally, phosphorylated on serine or threonine residues possibly by PKA.

It is found in the nucleus. The protein resides in the nucleus matrix. The protein localises to the nucleus speckle. It localises to the PML body. Its subcellular location is the cytoplasm. Functionally, could play a role in constitutive transport element (CTE)-mediated gene expression by association with DHX9. Increases CTE-dependent nuclear unspliced mRNA export. Proposed to target PRKACA to the nucleus but does not seem to be implicated in the binding of regulatory subunit II of PKA. May be involved in nuclear envelope breakdown and chromatin condensation. May be involved in anchoring nuclear membranes to chromatin in interphase and in releasing membranes from chromating at mitosis. May regulate the initiation phase of DNA replication when associated with TMPO isoform Beta. Required for cell cycle G2/M transition and histone deacetylation during mitosis. In mitotic cells recruits HDAC3 to the vicinity of chromatin leading to deacetylation and subsequent phosphorylation at 'Ser-10' of histone H3; in this function seems to act redundantly with AKAP8. May be involved in regulation of pre-mRNA splicing. In Mus musculus (Mouse), this protein is A-kinase anchor protein 8-like (Akap8l).